A 414-amino-acid chain; its full sequence is Probable indole-3-pyruvate monooxygenase YUCCA1 (414 aa).

25–30 provides a ligand contact to FAD; it reads GAGPSG. 189 to 194 provides a ligand contact to NADP(+); the sequence is GCGNSG.

Belongs to the FMO family. It depends on FAD as a cofactor. In terms of tissue distribution, expressed in the apical meristems and young floral primordia. Detected in the floral meristems and at the base of the floral organs.

The catalysed reaction is indole-3-pyruvate + NADPH + O2 + H(+) = (indol-3-yl)acetate + CO2 + NADP(+) + H2O. It participates in plant hormone metabolism; auxin biosynthesis. Involved in auxin biosynthesis, but not in the tryptamine or the CYP79B2/B3 branches. Catalyzes in vitro the N-oxidation of tryptamine to form N-hydroxyl tryptamine. Involved during embryogenesis and seedling development. Required for the formation of floral organs and vascular tissues. Belongs to the set of redundant YUCCA genes probably responsible for auxin biosynthesis in shoots. The polypeptide is Probable indole-3-pyruvate monooxygenase YUCCA1 (YUC1) (Arabidopsis thaliana (Mouse-ear cress)).